A 372-amino-acid polypeptide reads, in one-letter code: Queuine tRNA-ribosyltransferase (372 aa).

Catalysis depends on aspartate 89, which acts as the Proton acceptor. Residues 89 to 93 (DSGGF), aspartate 143, glutamine 185, and glycine 212 contribute to the substrate site. Residues 243–249 (GVGKPED) are RNA binding. The active-site Nucleophile is the aspartate 262. The tract at residues 267–271 (TRNAR) is RNA binding; important for wobble base 34 recognition. Residues cysteine 300, cysteine 302, cysteine 305, and histidine 331 each coordinate Zn(2+).

It belongs to the queuine tRNA-ribosyltransferase family. Homodimer. Within each dimer, one monomer is responsible for RNA recognition and catalysis, while the other monomer binds to the replacement base PreQ1. The cofactor is Zn(2+).

It catalyses the reaction 7-aminomethyl-7-carbaguanine + guanosine(34) in tRNA = 7-aminomethyl-7-carbaguanosine(34) in tRNA + guanine. It functions in the pathway tRNA modification; tRNA-queuosine biosynthesis. In terms of biological role, catalyzes the base-exchange of a guanine (G) residue with the queuine precursor 7-aminomethyl-7-deazaguanine (PreQ1) at position 34 (anticodon wobble position) in tRNAs with GU(N) anticodons (tRNA-Asp, -Asn, -His and -Tyr). Catalysis occurs through a double-displacement mechanism. The nucleophile active site attacks the C1' of nucleotide 34 to detach the guanine base from the RNA, forming a covalent enzyme-RNA intermediate. The proton acceptor active site deprotonates the incoming PreQ1, allowing a nucleophilic attack on the C1' of the ribose to form the product. After dissociation, two additional enzymatic reactions on the tRNA convert PreQ1 to queuine (Q), resulting in the hypermodified nucleoside queuosine (7-(((4,5-cis-dihydroxy-2-cyclopenten-1-yl)amino)methyl)-7-deazaguanosine). The sequence is that of Queuine tRNA-ribosyltransferase from Chromohalobacter salexigens (strain ATCC BAA-138 / DSM 3043 / CIP 106854 / NCIMB 13768 / 1H11).